A 172-amino-acid chain; its full sequence is Signal peptidase complex catalytic subunit SEC11 (172 aa).

Topologically, residues 1–14 (MLSSLQNPRQAAAQ) are cytoplasmic. The helical; Signal-anchor for type II membrane protein transmembrane segment at 15–35 (LMNFAMILSTAFMMWKGLSVA) threads the bilayer. Residues 36–172 (TDSPSPIVVV…MGLLVVIQRE (137 aa)) are Lumenal-facing. Residues Ser-49, His-90, and Asp-115 each act as charge relay system in the active site. Positions 158-169 (VMLGIMGLLVVI) are C-terminal short (CTS) helix.

This sequence belongs to the peptidase S26B family. Component of the signal peptidase complex (SPC) composed of a catalytic subunit SEC11 and three accessory subunits SPC1, SPC2 and SPC3. The complex induces a local thinning of the ER membrane which is used to measure the length of the signal peptide (SP) h-region of protein substrates. This ensures the selectivity of the complex towards h-regions shorter than 18-20 amino acids. SPC associates with the translocon complex.

The protein localises to the endoplasmic reticulum membrane. It carries out the reaction Cleavage of hydrophobic, N-terminal signal or leader sequences from secreted and periplasmic proteins.. Its function is as follows. Catalytic component of the signal peptidase complex (SPC) which catalyzes the cleavage of N-terminal signal sequences from nascent proteins as they are translocated into the lumen of the endoplasmic reticulum. Specifically cleaves N-terminal signal peptides that contain a hydrophobic alpha-helix (h-region) shorter than 18-20 amino acids. This is Signal peptidase complex catalytic subunit SEC11 (SEC11) from Metarhizium robertsii (strain ARSEF 23 / ATCC MYA-3075) (Metarhizium anisopliae (strain ARSEF 23)).